The following is a 185-amino-acid chain: UPF0301 protein PSHAa2600 (185 aa).

The protein belongs to the UPF0301 (AlgH) family.

This chain is UPF0301 protein PSHAa2600, found in Pseudoalteromonas translucida (strain TAC 125).